A 109-amino-acid chain; its full sequence is Large ribosomal subunit protein eL30 (109 aa).

Belongs to the eukaryotic ribosomal protein eL30 family.

The chain is Large ribosomal subunit protein eL30 (RPL30) from Yarrowia lipolytica (strain CLIB 122 / E 150) (Yeast).